We begin with the raw amino-acid sequence, 1178 residues long: Niemann-Pick type C1-related protein (1178 aa).

A glycan (N-linked (GlcNAc...) asparagine) is linked at Asn-41. The next 2 helical transmembrane spans lie at 157–177 and 412–432; these read PWLF…GIFL and VVEW…TSVV. One can recognise an SSD domain in the interval 414–570; the sequence is EWLRLCAAVL…LTFFLAGLSL (157 aa). A glycan (N-linked (GlcNAc...) asparagine) is linked at Asn-433. 4 consecutive transmembrane segments (helical) span residues 448–468, 478–498, 516–536, and 545–565; these read GALA…LCGV, PFLA…AYSL, AGLS…IGAL, and FCII…TFFL. Asn-621 is a glycosylation site (N-linked (GlcNAc...) asparagine). The helical transmembrane segment at 789–809 threads the bilayer; that stretch reads ATVLVIFAAVTALAIYGATTL. 2 N-linked (GlcNAc...) asparagine glycosylation sites follow: Asn-917 and Asn-943. 5 helical membrane-spanning segments follow: residues 986–1006, 1013–1033, 1037–1057, 1080–1100, and 1114–1134; these read FTLT…LLLI, IIVV…MALI, LSMI…DFTI, IVMG…ILAL, and MMFM…PVVL.

This sequence belongs to the patched family.

The protein resides in the inner membrane complex. It carries out the reaction cholesterol(in) = cholesterol(out). Functionally, likely facilitates the efflux of cholesterol and gangliosides from membranes. Plays a role in the regulation of lipid homeostasis. The chain is Niemann-Pick type C1-related protein from Toxoplasma gondii (strain ATCC 50611 / Me49).